The following is a 221-amino-acid chain: Small ribosomal subunit protein uS5 (221 aa).

The S5 DRBM domain occupies 46–109 (LKDEVIDIKR…INAKLNIMEI (64 aa)).

The protein belongs to the universal ribosomal protein uS5 family. As to quaternary structure, part of the 30S ribosomal subunit. Contacts protein S4.

Functionally, with S4 and S12 plays an important role in translational accuracy. The sequence is that of Small ribosomal subunit protein uS5 from Thermoplasma acidophilum (strain ATCC 25905 / DSM 1728 / JCM 9062 / NBRC 15155 / AMRC-C165).